We begin with the raw amino-acid sequence, 444 residues long: C4-dicarboxylate transport protein (444 aa).

The next 8 helical transmembrane spans lie at L7–Y29, I44–M66, A79–V101, I143–A165, V186–F208, L221–I243, V291–M313, and F353–L375. The tract at residues S418–K444 is disordered.

Belongs to the dicarboxylate/amino acid:cation symporter (DAACS) (TC 2.A.23) family.

It is found in the cell inner membrane. Its function is as follows. Responsible for the transport of dicarboxylates such as succinate, fumarate, and malate from the periplasm across the inner membrane. This Pseudomonas chlororaphis (Pseudomonas aureofaciens) protein is C4-dicarboxylate transport protein.